A 582-amino-acid polypeptide reads, in one-letter code: Sulfite reductase [NADPH] hemoprotein beta-component (582 aa).

Over residues 1-12 (MDLKVKVDRSRD) the composition is skewed to basic and acidic residues. Residues 1–26 (MDLKVKVDRSRDVSQPLDKLGPDETL) are disordered. [4Fe-4S] cluster-binding residues include cysteine 447, cysteine 453, cysteine 492, and cysteine 496. Cysteine 496 contacts siroheme.

It belongs to the nitrite and sulfite reductase 4Fe-4S domain family. In terms of assembly, alpha(8)-beta(8). The alpha component is a flavoprotein, the beta component is a hemoprotein. It depends on siroheme as a cofactor. [4Fe-4S] cluster serves as cofactor.

The enzyme catalyses hydrogen sulfide + 3 NADP(+) + 3 H2O = sulfite + 3 NADPH + 4 H(+). It participates in sulfur metabolism; hydrogen sulfide biosynthesis; hydrogen sulfide from sulfite (NADPH route): step 1/1. Component of the sulfite reductase complex that catalyzes the 6-electron reduction of sulfite to sulfide. This is one of several activities required for the biosynthesis of L-cysteine from sulfate. In Afipia carboxidovorans (strain ATCC 49405 / DSM 1227 / KCTC 32145 / OM5) (Oligotropha carboxidovorans), this protein is Sulfite reductase [NADPH] hemoprotein beta-component.